A 104-amino-acid polypeptide reads, in one-letter code: Large ribosomal subunit protein uL24 (104 aa).

Belongs to the universal ribosomal protein uL24 family. Part of the 50S ribosomal subunit.

Its function is as follows. One of two assembly initiator proteins, it binds directly to the 5'-end of the 23S rRNA, where it nucleates assembly of the 50S subunit. In terms of biological role, one of the proteins that surrounds the polypeptide exit tunnel on the outside of the subunit. The sequence is that of Large ribosomal subunit protein uL24 from Maricaulis maris (strain MCS10) (Caulobacter maris).